A 340-amino-acid polypeptide reads, in one-letter code: DNA-directed RNA polymerase subunit alpha (340 aa).

Positions 1–235 (MYRNWTELIK…DQLNPFINFD (235 aa)) are alpha N-terminal domain (alpha-NTD). Positions 251 to 340 (WNPNLFRKVD…LSKQFEEENF (90 aa)) are alpha C-terminal domain (alpha-CTD).

It belongs to the RNA polymerase alpha chain family. Homodimer. The RNAP catalytic core consists of 2 alpha, 1 beta, 1 beta' and 1 omega subunit. When a sigma factor is associated with the core the holoenzyme is formed, which can initiate transcription.

The enzyme catalyses RNA(n) + a ribonucleoside 5'-triphosphate = RNA(n+1) + diphosphate. Its function is as follows. DNA-dependent RNA polymerase catalyzes the transcription of DNA into RNA using the four ribonucleoside triphosphates as substrates. The polypeptide is DNA-directed RNA polymerase subunit alpha (Magnetococcus marinus (strain ATCC BAA-1437 / JCM 17883 / MC-1)).